The primary structure comprises 308 residues: Tetraacyldisaccharide 4'-kinase (308 aa).

Residue 63-70 (SFGGNGKT) coordinates ATP.

It belongs to the LpxK family.

It catalyses the reaction a lipid A disaccharide + ATP = a lipid IVA + ADP + H(+). It functions in the pathway glycolipid biosynthesis; lipid IV(A) biosynthesis; lipid IV(A) from (3R)-3-hydroxytetradecanoyl-[acyl-carrier-protein] and UDP-N-acetyl-alpha-D-glucosamine: step 6/6. Functionally, transfers the gamma-phosphate of ATP to the 4'-position of a tetraacyldisaccharide 1-phosphate intermediate (termed DS-1-P) to form tetraacyldisaccharide 1,4'-bis-phosphate (lipid IVA). In Campylobacter jejuni subsp. jejuni serotype O:6 (strain 81116 / NCTC 11828), this protein is Tetraacyldisaccharide 4'-kinase.